A 150-amino-acid chain; its full sequence is Interferon antagonist OPG027 (150 aa).

The protein belongs to the orthopoxvirus OPG027 family.

Functionally, inhibits antiviral activity induced by type I interferons. Does not block signal transduction of IFN, but is important to counteract the host antiviral state induced by a pre-treatment with IFN. The chain is Interferon antagonist OPG027 (OPG027) from Vaccinia virus (strain Ankara) (VACV).